Reading from the N-terminus, the 454-residue chain is Argininosuccinate lyase (454 aa).

Belongs to the lyase 1 family. Argininosuccinate lyase subfamily.

Its subcellular location is the cytoplasm. It carries out the reaction 2-(N(omega)-L-arginino)succinate = fumarate + L-arginine. The protein operates within amino-acid biosynthesis; L-arginine biosynthesis; L-arginine from L-ornithine and carbamoyl phosphate: step 3/3. The chain is Argininosuccinate lyase from Herpetosiphon aurantiacus (strain ATCC 23779 / DSM 785 / 114-95).